The primary structure comprises 209 residues: Thymidine kinase (209 aa).

ATP-binding positions include 9–16 and 88–91; these read SAMNAGKT and DEAQ. Catalysis depends on Glu89, which acts as the Proton acceptor.

This sequence belongs to the thymidine kinase family. Homotetramer.

The protein resides in the cytoplasm. The enzyme catalyses thymidine + ATP = dTMP + ADP + H(+). The sequence is that of Thymidine kinase from Xanthomonas oryzae pv. oryzae (strain MAFF 311018).